The chain runs to 780 residues: MAKKRAKKRAPAKKRQQKKQQSQMQPLWFEILGVVLIGIAIIMIFEFGIIGRGLSAFSRFLLGNWYVALPFLIIVQALIFMIKRQIGGYKHRIVIGCLFILGSMLLFSHVHLFQTLYESKVLMSNSALKETWKVLITNDGIHDQTGTLGGGMLGAVLFAMFYSLVDSSGATVAGVLLLLIGIILLTGKALIPFLVEQTPILMNDIKKKWAAREKKSVKSPEEKRKESARSNRKSKPKPVDTSEMEAVQENPEPASEPIISSFTAKIEQATQPEIVQEKQSKAQEDSTLDPKDPVTDYPVMGGEQENESYVLPSAKLLEPPVASDQSGEYDLIQANAKKLEKTFLSFGVKTRVTQVHLGPAVTKYEILPDTGVKVSRIVSLADDIALALAASGIRIEAPIPGKSAVGIEVPNNAVAMVSLREVLESKENNPPEAKLLVGLGRDVTGQAMMTELNKMPHVLIAGATGSGKSVCVNGIIMSIIMRAKPHEVKMMMIDPKMVELNVFNGIPHLLAPVVTDPRKAAQALQRVVSEMERRYELFSHTGTRNIEGYNNHIEQWNEDHDEKHPRMPYIVVIVDELADLMMVASSDVEDSITRLAQMARAAGIHLIIATQRPSVDVITGIIKANIPSRIAFAVSSAIDSRTILDGAGAEKLLGRGDMLFLPAGASKPTRIQGAFVSDEEVEAVVNFVIEQQKAQYQEEMIPTEVEVVAPHEETDELYDEAVQMVVDMQTASVSMIQRRFRVGYARAARIVDQMEARGVVGPPEGSKPRHVLLTKSKLEM.

Residues 1-18 (MAKKRAKKRAPAKKRQQK) are compositionally biased toward basic residues. The disordered stretch occupies residues 1–21 (MAKKRAKKRAPAKKRQQKKQQ). 5 helical membrane passes run 31-51 (ILGVVLIGIAIIMIFEFGIIG), 60-80 (FLLGNWYVALPFLIIVQALIF), 93-113 (IVIGCLFILGSMLLFSHVHLF), 145-165 (TGTLGGGMLGAVLFAMFYSLV), and 175-195 (VLLLLIGIILLTGKALIPFLV). Residues 196–780 (EQTPILMNDI…VLLTKSKLEM (585 aa)) lie on the Cytoplasmic side of the membrane. Composition is skewed to basic and acidic residues over residues 212–229 (REKKSVKSPEEKRKESAR) and 275–294 (VQEKQSKAQEDSTLDPKDPV). Disordered stretches follow at residues 212 to 255 (REKK…EPAS) and 274 to 295 (IVQEKQSKAQEDSTLDPKDPVT). A FtsK domain is found at 445-641 (GQAMMTELNK…FAVSSAIDSR (197 aa)). 465–470 (GSGKSV) serves as a coordination point for ATP.

This sequence belongs to the FtsK/SpoIIIE/SftA family. In terms of assembly, homohexamer. Forms a ring that surrounds DNA.

Its subcellular location is the cell membrane. Its function is as follows. Essential cell division protein that coordinates cell division and chromosome segregation. The N-terminus is involved in assembly of the cell-division machinery. The C-terminus functions as a DNA motor that moves dsDNA in an ATP-dependent manner towards the dif recombination site, which is located within the replication terminus region. Required for activation of the Xer recombinase, allowing activation of chromosome unlinking by recombination. Also involved in chromosome segregation into the prespore compartment during sporulation. This is DNA translocase FtsK (ftsK) from Sporosarcina ureae.